The primary structure comprises 242 residues: Probable transcriptional regulatory protein XAC3151 (242 aa).

This sequence belongs to the TACO1 family.

Its subcellular location is the cytoplasm. In Xanthomonas axonopodis pv. citri (strain 306), this protein is Probable transcriptional regulatory protein XAC3151.